Consider the following 231-residue polypeptide: Small ribosomal subunit protein uS3 (231 aa).

Positions 17–86 (VEQYLNKELK…SPQVEVQQVA (70 aa)) constitute a KH type-2 domain.

It belongs to the universal ribosomal protein uS3 family. In terms of assembly, part of the 30S ribosomal subunit.

In terms of biological role, binds the lower part of the 30S subunit head. The chain is Small ribosomal subunit protein uS3 from Methanocorpusculum labreanum (strain ATCC 43576 / DSM 4855 / Z).